The primary structure comprises 678 residues: DNA ligase (678 aa).

Residues 32-36 (DSEYD), 81-82 (SL), and Glu113 contribute to the NAD(+) site. Lys115 serves as the catalytic N6-AMP-lysine intermediate. NAD(+) is bound by residues Arg136, Glu174, Lys291, and Lys315. Positions 409, 412, 427, and 433 each coordinate Zn(2+). A BRCT domain is found at 596 to 678 (ASDNPFAGKT…MRLLGESSDA (83 aa)).

The protein belongs to the NAD-dependent DNA ligase family. LigA subfamily. Mg(2+) is required as a cofactor. It depends on Mn(2+) as a cofactor.

It catalyses the reaction NAD(+) + (deoxyribonucleotide)n-3'-hydroxyl + 5'-phospho-(deoxyribonucleotide)m = (deoxyribonucleotide)n+m + AMP + beta-nicotinamide D-nucleotide.. In terms of biological role, DNA ligase that catalyzes the formation of phosphodiester linkages between 5'-phosphoryl and 3'-hydroxyl groups in double-stranded DNA using NAD as a coenzyme and as the energy source for the reaction. It is essential for DNA replication and repair of damaged DNA. This Sodalis glossinidius (strain morsitans) protein is DNA ligase.